The sequence spans 61 residues: Large ribosomal subunit protein uL29 (61 aa).

This sequence belongs to the universal ribosomal protein uL29 family.

The chain is Large ribosomal subunit protein uL29 from Nitratidesulfovibrio vulgaris (strain DSM 19637 / Miyazaki F) (Desulfovibrio vulgaris).